Consider the following 177-residue polypeptide: ATP synthase subunit b, chloroplastic (177 aa).

The helical transmembrane segment at 22-42 (ILETNIINLAAVVGIVVFFVG) threads the bilayer.

Belongs to the ATPase B chain family. F-type ATPases have 2 components, F(1) - the catalytic core - and F(0) - the membrane proton channel. F(1) has five subunits: alpha(3), beta(3), gamma(1), delta(1), epsilon(1). F(0) has four main subunits: a(1), b(1), b'(1) and c(10-14). The alpha and beta chains form an alternating ring which encloses part of the gamma chain. F(1) is attached to F(0) by a central stalk formed by the gamma and epsilon chains, while a peripheral stalk is formed by the delta, b and b' chains.

It localises to the plastid. Its subcellular location is the chloroplast thylakoid membrane. Its function is as follows. F(1)F(0) ATP synthase produces ATP from ADP in the presence of a proton or sodium gradient. F-type ATPases consist of two structural domains, F(1) containing the extramembraneous catalytic core and F(0) containing the membrane proton channel, linked together by a central stalk and a peripheral stalk. During catalysis, ATP synthesis in the catalytic domain of F(1) is coupled via a rotary mechanism of the central stalk subunits to proton translocation. Functionally, component of the F(0) channel, it forms part of the peripheral stalk, linking F(1) to F(0). This chain is ATP synthase subunit b, chloroplastic, found in Oedogonium cardiacum (Filamentous green alga).